The following is a 551-amino-acid chain: Protein GPR107 (551 aa).

A signal peptide spans Met-1–Gly-33. The Extracellular segment spans residues Leu-40–Pro-262. N-linked (GlcNAc...) asparagine glycans are attached at residues Asn-64 and Asn-209. Cys-106 and Cys-226 are disulfide-bonded. The chain crosses the membrane as a helical span at residues Lys-263–Leu-283. Over Arg-284 to Lys-292 the chain is Cytoplasmic. A helical transmembrane segment spans residues Ile-293–Ile-313. Topologically, residues Asp-314–His-336 are extracellular. A helical membrane pass occupies residues Leu-337–Ile-357. The Cytoplasmic portion of the chain corresponds to Lys-358 to Lys-367. Residues Ile-368 to Ser-388 form a helical membrane-spanning segment. Residues Thr-389–Asp-401 are Extracellular-facing. Residues Ser-402 to Ile-422 form a helical membrane-spanning segment. The Cytoplasmic segment spans residues Arg-423–Tyr-449. A helical transmembrane segment spans residues Val-450–Val-470. Topologically, residues Pro-471–Lys-475 are extracellular. Residues Trp-476–Tyr-495 form a helical membrane-spanning segment. The Cytoplasmic segment spans residues Lys-496 to Ala-551. Phosphoserine is present on Ser-537.

This sequence belongs to the LU7TM family. In terms of processing, cleaved by FURIN to yield two fragments that remain associated via a disulfide bond.

It localises to the cell membrane. The protein localises to the golgi apparatus. The protein resides in the trans-Golgi network membrane. In terms of biological role, has been proposed to act as a receptor for neuronostatin, a peptide derived from the somatostatin/SST precursor. Involved in blood sugar regulation through the induction of glucagon in response to low glucose. This Mus musculus (Mouse) protein is Protein GPR107 (Gpr107).